Here is a 557-residue protein sequence, read N- to C-terminus: Dihydroxy-acid dehydratase (557 aa).

C47 is a binding site for [2Fe-2S] cluster. Mg(2+) is bound at residue D79. Residue C120 participates in [2Fe-2S] cluster binding. Mg(2+) contacts are provided by D121 and K122. K122 is modified (N6-carboxylysine). [2Fe-2S] cluster is bound at residue C192. E444 lines the Mg(2+) pocket. The active-site Proton acceptor is the S470.

This sequence belongs to the IlvD/Edd family. As to quaternary structure, homodimer. It depends on [2Fe-2S] cluster as a cofactor. Mg(2+) serves as cofactor.

The enzyme catalyses (2R)-2,3-dihydroxy-3-methylbutanoate = 3-methyl-2-oxobutanoate + H2O. It catalyses the reaction (2R,3R)-2,3-dihydroxy-3-methylpentanoate = (S)-3-methyl-2-oxopentanoate + H2O. The protein operates within amino-acid biosynthesis; L-isoleucine biosynthesis; L-isoleucine from 2-oxobutanoate: step 3/4. It participates in amino-acid biosynthesis; L-valine biosynthesis; L-valine from pyruvate: step 3/4. Its function is as follows. Functions in the biosynthesis of branched-chain amino acids. Catalyzes the dehydration of (2R,3R)-2,3-dihydroxy-3-methylpentanoate (2,3-dihydroxy-3-methylvalerate) into 2-oxo-3-methylpentanoate (2-oxo-3-methylvalerate) and of (2R)-2,3-dihydroxy-3-methylbutanoate (2,3-dihydroxyisovalerate) into 2-oxo-3-methylbutanoate (2-oxoisovalerate), the penultimate precursor to L-isoleucine and L-valine, respectively. The protein is Dihydroxy-acid dehydratase of Synechococcus sp. (strain CC9902).